Consider the following 492-residue polypeptide: Metal cation symporter ZIP14 (492 aa).

Positions 1–30 (MKLLLLHPAFQSCLLLTLLGLWRTTPEAHA) are cleaved as a signal peptide. Residues 31 to 157 (SSLGAPAISA…PSAVEVWGYG (127 aa)) lie on the Extracellular side of the membrane. Residues Asn-77, Asn-87, and Asn-102 are each glycosylated (N-linked (GlcNAc...) asparagine). The helical transmembrane segment at 158–178 (LLCVTVISLCSLLGASVVPFM) threads the bilayer. Residues 179–186 (KKTFYKRL) are Cytoplasmic-facing. Residues 187 to 207 (LLYFIALAIGTLYSNALFQLI) form a helical membrane-spanning segment. Residues 208 to 224 (PEAFGFNPLEDYYVSKS) are Extracellular-facing. The chain crosses the membrane as a helical span at residues 225 to 245 (AVVFGGFYLFFFTEKILKILL). The Cytoplasmic segment spans residues 246–397 (KQKNEHHHGH…LLNAGMSIQQ (152 aa)). The HHHGHXHX-motif motif lies at 251 to 258 (HHHGHSHY). An XEXPHE-motif motif is present at residues 376–381 (EEFPHE). Residues 398-418 (ALFFNFLSACCCYLGLAFGIL) traverse the membrane as a helical segment. The Extracellular segment spans residues 419–424 (AGSHFS). A helical membrane pass occupies residues 425 to 445 (ANWIFALAGGMFLYISLADMF). Residues 446 to 460 (PEMNEVCQEDERKGS) are Cytoplasmic-facing. The chain crosses the membrane as a helical span at residues 461–481 (ILIPFIIQNLGLLTGFTIMVV). Residues 482 to 492 (LTMYSGQIQIG) lie on the Extracellular side of the membrane.

The protein belongs to the ZIP transporter (TC 2.A.5) family. Homotrimer. Post-translationally, ubiquitinated. Ubiquitination occurs upon iron depletion. The ubiquitinated form undergoes proteasomal degradation. N-glycosylated. N-glycosylation at Asn-102 is required for iron-regulated extraction of the transporter from membranes and subsequent proteasomal degradation. In terms of tissue distribution, ubiquitously expressed, with higher expression in liver, pancreas, fetal liver, thyroid gland, left and right ventricle, right atrium and fetal heart. Weakly expressed in spleen, thymus, and peripheral blood leukocytes. Expressed in liver and in brain by large neurons in the globus pallidus, the insular cortex and the dentate nucleus and to a lower extent in the putamen and the caudate nucleus (at protein level). Expressed in osteoblasts and giant osteoclast-like cells, but not in osteocytes found osteoblastoma and giant cell tumors (at protein level). Expressed by microvascular capillary endothelial cells that constitute the blood-brain barrier (at protein level). Expressed by macrophages. Widely expressed but not detected in brain, heart, skeletal muscle, placenta and fetal skin.

Its subcellular location is the cell membrane. The protein localises to the apical cell membrane. The protein resides in the basolateral cell membrane. It is found in the early endosome membrane. It localises to the late endosome membrane. Its subcellular location is the lysosome membrane. The catalysed reaction is Zn(2+)(out) + 2 hydrogencarbonate(out) = Zn(2+)(in) + 2 hydrogencarbonate(in). The enzyme catalyses Mn(2+)(out) + 2 hydrogencarbonate(out) = Mn(2+)(in) + 2 hydrogencarbonate(in). It carries out the reaction Fe(2+)(out) + 2 hydrogencarbonate(out) = Fe(2+)(in) + 2 hydrogencarbonate(in). It catalyses the reaction Cd(2+)(out) + 2 hydrogencarbonate(out) = Cd(2+)(in) + 2 hydrogencarbonate(in). In terms of biological role, electroneutral transporter of the plasma membrane mediating the cellular uptake of the divalent metal cations zinc, manganese and iron that are important for tissue homeostasis, metabolism, development and immunity. Functions as an energy-dependent symporter, transporting through the membranes an electroneutral complex composed of a divalent metal cation and two bicarbonate anions. Beside these endogenous cellular substrates, can also import cadmium a non-essential metal which is cytotoxic and carcinogenic. Controls the cellular uptake by the intestinal epithelium of systemic zinc, which is in turn required to maintain tight junctions and the intestinal permeability. Modifies the activity of zinc-dependent phosphodiesterases, thereby indirectly regulating G protein-coupled receptor signaling pathways important for gluconeogenesis and chondrocyte differentiation. Regulates insulin receptor signaling, glucose uptake, glycogen synthesis and gluconeogenesis in hepatocytes through the zinc-dependent intracellular catabolism of insulin. Through zinc cellular uptake also plays a role in the adaptation of cells to endoplasmic reticulum stress. Major manganese transporter of the basolateral membrane of intestinal epithelial cells, it plays a central role in manganese systemic homeostasis through intestinal manganese uptake. Also involved in manganese extracellular uptake by cells of the blood-brain barrier. May also play a role in manganese and zinc homeostasis participating in their elimination from the blood through the hepatobiliary excretion. Also functions in the extracellular uptake of free iron. May also function intracellularly and mediate the transport from endosomes to cytosol of iron endocytosed by transferrin. Plays a role in innate immunity by regulating the expression of cytokines by activated macrophages. The chain is Metal cation symporter ZIP14 from Homo sapiens (Human).